We begin with the raw amino-acid sequence, 421 residues long: EGFR adapter protein (421 aa).

4 disordered regions span residues T18 to Q94, D109 to D154, E173 to G194, and P372 to T396. Residues S21–S30 are compositionally biased toward low complexity. The span at F62 to P89 shows a compositional bias: basic residues. Positions D109–H120 are enriched in basic and acidic residues. The segment covering S181–G194 has biased composition (low complexity). Positions W286–R379 constitute an SH2 domain.

In terms of assembly, may interact (via SH2 domain) with Egfr (when phosphorylated). Detected along the wing margin, with high levels of expression in two stripes of cells on either side of the dorsal/ventral boundary and lower levels of expression in a small region at the anteroposterior boundary (at protein level). High levels of expression along two parallel stripes of cells on either side of the wing pouch dorsal/ventral boundary, and slightly lower levels of expression in a region either side of the anteroposterior boundary. Also expressed in discrete regions of the wing imaginal disk outside of the pouch. Expressed in eye imaginal disk photoreceptors with highest levels of expression in R7 photoreceptor cells.

In terms of biological role, involved in the negative regulation of the Egfr/Ras signaling pathway. During wing morphogenesis, may function redundantly with PVRAP to inhibit Egfr activity and prevent uncontrolled cell growth. In Drosophila melanogaster (Fruit fly), this protein is EGFR adapter protein.